Consider the following 55-residue polypeptide: Large ribosomal subunit protein bL32 (55 aa).

The span at 1–19 shows a compositional bias: basic residues; it reads MAVPKRRMSRANTHTRRSQ. The tract at residues 1–21 is disordered; it reads MAVPKRRMSRANTHTRRSQWK.

The protein belongs to the bacterial ribosomal protein bL32 family.

This Corynebacterium kroppenstedtii (strain DSM 44385 / JCM 11950 / CIP 105744 / CCUG 35717) protein is Large ribosomal subunit protein bL32.